Reading from the N-terminus, the 131-residue chain is Chromatin accessibility complex protein 1 (131 aa).

At alanine 2 the chain carries N-acetylalanine. Residues 100-124 adopt a coiled-coil conformation; it reads ASKYLKMLKEEKREEDEENDNDNES. Lysine 102 bears the N6-acetyllysine mark. Positions 109-131 are disordered; it reads EEKREEDEENDNDNESDHDEADS. A compositionally biased stretch (acidic residues) spans 112–131; it reads REEDEENDNDNESDHDEADS. Serine 124 is subject to Phosphoserine.

Heterodimer with POLE3; binds to DNA. Component of the CHRAC ISWI chromatin remodeling complex at least composed of SMARCA5/SNF2H, BAZ1A/ACF1, CHRAC1 and POLE3; the complex preferentially binds DNA through the CHRAC1-POLE3 heterodimer and possesses ATP-dependent nucleosome-remodeling activity. Within the complex, the heterodimer with POLE3 interacts with SMARCA5/SNF2H; the interaction is direct and enhances nucleosome sliding activity by the SMARCA5/SNF2H and BAZ1A/ACF1 interaction. Within the complex, the heterodimer with POLE3 interacts with BAZ1A/ACF1; the interactions are direct. In terms of tissue distribution, expressed in heart, brain, placenta, lung, liver, skeletal muscle, kidney and pancreas.

The protein resides in the nucleus. In terms of biological role, forms a complex with DNA polymerase epsilon subunit POLE3 and binds naked DNA, which is then incorporated into chromatin, aided by the nucleosome remodeling activity of ISWI/SNF2H and ACF1. Does not enhance nucleosome sliding activity of the ACF-5 ISWI chromatin remodeling complex. In Homo sapiens (Human), this protein is Chromatin accessibility complex protein 1 (CHRAC1).